The primary structure comprises 274 residues: Pantothenate synthetase (274 aa).

27–34 (MGALHQGH) is a binding site for ATP. Residue His34 is the Proton donor of the active site. Residue Gln58 coordinates (R)-pantoate. Gln58 lines the beta-alanine pocket. 144–147 (GKKD) lines the ATP pocket. Position 150 (Gln150) interacts with (R)-pantoate. ATP-binding positions include Ile173 and 181-184 (LSSR).

Belongs to the pantothenate synthetase family. Homodimer.

It localises to the cytoplasm. It catalyses the reaction (R)-pantoate + beta-alanine + ATP = (R)-pantothenate + AMP + diphosphate + H(+). It participates in cofactor biosynthesis; (R)-pantothenate biosynthesis; (R)-pantothenate from (R)-pantoate and beta-alanine: step 1/1. Its function is as follows. Catalyzes the condensation of pantoate with beta-alanine in an ATP-dependent reaction via a pantoyl-adenylate intermediate. The polypeptide is Pantothenate synthetase (Sulfurovum sp. (strain NBC37-1)).